Reading from the N-terminus, the 194-residue chain is Orotate phosphoribosyltransferase (194 aa).

Residues R102, K103, K106, H108, and E129 to S137 each bind 5-phospho-alpha-D-ribose 1-diphosphate. T133 and R161 together coordinate orotate.

This sequence belongs to the purine/pyrimidine phosphoribosyltransferase family. PyrE subfamily. As to quaternary structure, homodimer. Mg(2+) serves as cofactor.

It carries out the reaction orotidine 5'-phosphate + diphosphate = orotate + 5-phospho-alpha-D-ribose 1-diphosphate. It functions in the pathway pyrimidine metabolism; UMP biosynthesis via de novo pathway; UMP from orotate: step 1/2. Catalyzes the transfer of a ribosyl phosphate group from 5-phosphoribose 1-diphosphate to orotate, leading to the formation of orotidine monophosphate (OMP). The polypeptide is Orotate phosphoribosyltransferase (Prochlorococcus marinus (strain MIT 9211)).